The primary structure comprises 545 residues: Hyaluronidase PH-20 (545 aa).

An N-terminal signal peptide occupies residues 1-35 (MGVLKFKHIFFGSAVELSGVFQIVFIFLLIPCCLT). 2 disulfide bridges follow: cysteine 60/cysteine 355 and cysteine 224/cysteine 239. Asparagine 82 is a glycosylation site (N-linked (GlcNAc...) asparagine). Glutamate 148 functions as the Proton donor in the catalytic mechanism. Asparagine 180 carries an N-linked (GlcNAc...) asparagine glycan. Residue asparagine 372 is glycosylated (N-linked (GlcNAc...) asparagine). Disulfide bonds link cysteine 380–cysteine 391, cysteine 385–cysteine 439, and cysteine 441–cysteine 468.

Belongs to the glycosyl hydrolase 56 family. As to expression, testis.

The protein localises to the cell membrane. The catalysed reaction is Random hydrolysis of (1-&gt;4)-linkages between N-acetyl-beta-D-glucosamine and D-glucuronate residues in hyaluronate.. Its function is as follows. Involved in sperm-egg adhesion. Upon fertilization sperm must first penetrate a layer of cumulus cells that surrounds the egg before reaching the zona pellucida. The cumulus cells are embedded in a matrix containing hyaluronic acid which is formed prior to ovulation. This protein aids in penetrating the layer of cumulus cells by digesting hyaluronic acid. In Oryctolagus cuniculus (Rabbit), this protein is Hyaluronidase PH-20 (SPAM1).